Here is a 387-residue protein sequence, read N- to C-terminus: Fetuin-B (387 aa).

An N-terminal signal peptide occupies residues 1-18 (MNVLLLLVLCTLAMGCGA). Cystatin fetuin-B-type domains lie at 25–139 (AARP…YNCT) and 150–258 (MTCP…VTCS). Asn-37 carries an N-linked (GlcNAc...) asparagine glycan. 5 cysteine pairs are disulfide-bonded: Cys-94–Cys-105, Cys-118–Cys-138, Cys-152–Cys-155, Cys-217–Cys-225, and Cys-238–Cys-257. The N-linked (GlcNAc...) asparagine glycan is linked to Asn-137. The disordered stretch occupies residues 264–306 (APTPRGENATVNQRPANPSKTEELQQQNTAPTNSPTKAVPKGS). N-linked (GlcNAc...) asparagine glycosylation is present at Asn-271. Polar residues predominate over residues 272-299 (ATVNQRPANPSKTEELQQQNTAPTNSPT). O-linked (GalNAc...) threonine glycans are attached at residues Thr-292 and Thr-295. Ser-320 is modified (phosphoserine). Residues 366–387 (KEQRSAECPGPAQKGYPFILPS) are disordered.

The protein belongs to the fetuin family. Liver and testis.

The protein localises to the secreted. Protease inhibitor required for egg fertilization. Required to prevent premature zona pellucida hardening before fertilization, probably by inhibiting the protease activity of ASTL, a protease that mediates the cleavage of ZP2 and triggers zona pellucida hardening. The sequence is that of Fetuin-B (FETUB) from Bos taurus (Bovine).